The chain runs to 545 residues: Cytosolic Fe-S cluster assembly factor NAR1 (545 aa).

6 residues coordinate [4Fe-4S] cluster: Cys20, Cys72, Cys75, Cys78, Cys186, and Cys241. Positions 401–438 (PSTKQTSTVKANPLASRRRARLASKTDGTASSNNATQD) are disordered. Positions 426 to 438 (TDGTASSNNATQD) are enriched in polar residues. Cys453 and Cys457 together coordinate [4Fe-4S] cluster.

This sequence belongs to the NARF family.

Its function is as follows. Component of the cytosolic Fe/S protein assembly machinery. Required for maturation of extramitochondrial Fe/S proteins. May play a role in the transfer of pre-assembled Fe/S clusters to target apoproteins. The polypeptide is Cytosolic Fe-S cluster assembly factor NAR1 (NAR1) (Debaryomyces hansenii (strain ATCC 36239 / CBS 767 / BCRC 21394 / JCM 1990 / NBRC 0083 / IGC 2968) (Yeast)).